Consider the following 365-residue polypeptide: Selina-4(15),7(11)-diene synthase ((2E,6E)-farnesyl diphosphate cyclizing) (365 aa).

2 residues coordinate Mg(2+): D82 and E87. The DDXXXE motif motif lies at 82–87 (DDGHCE). R178 contacts substrate. 2 residues coordinate Mg(2+): N224 and S228. K231 contacts substrate. E232 contributes to the Mg(2+) binding site. 310 to 311 (RY) provides a ligand contact to substrate.

It belongs to the terpene synthase family. Monomer. The cofactor is Mg(2+).

It carries out the reaction (2E,6E)-farnesyl diphosphate = selina-4(15),7(11)-diene + diphosphate. It functions in the pathway secondary metabolite biosynthesis; terpenoid biosynthesis. Functionally, catalyzes the conversion of (2E,6E)-farnesyl diphosphate (FPP) to yield the bicyclic sesquiterpene selina-4(15),7(11)-diene via a 1,10-cyclization, which requires the abstraction of the pyrophosphate from FPP leading to a (E,E)-germacradienyl cation. The only accepted substrate is (2E,6E)-farnesyl diphosphate (FPP). This chain is Selina-4(15),7(11)-diene synthase ((2E,6E)-farnesyl diphosphate cyclizing), found in Streptomyces pristinaespiralis (strain ATCC 25486 / DSM 40338 / CBS 914.69 / JCM 4507 / KCC S-0507 / NBRC 13074 / NRRL 2958 / 5647).